We begin with the raw amino-acid sequence, 280 residues long: Polyamine aminopropyltransferase (280 aa).

The region spanning 3–237 is the PABS domain; it reads DVYFMERDPY…YWWSFSVGSK (235 aa). Q33 is an S-methyl-5'-thioadenosine binding site. Residues H64 and D88 each contribute to the spermidine site. S-methyl-5'-thioadenosine-binding positions include D108 and 139–140; that span reads DG. Catalysis depends on D157, which acts as the Proton acceptor. 157-160 contributes to the spermidine binding site; the sequence is DSTD.

Belongs to the spermidine/spermine synthase family. In terms of assembly, homodimer or homotetramer.

The protein resides in the cytoplasm. It catalyses the reaction S-adenosyl 3-(methylsulfanyl)propylamine + putrescine = S-methyl-5'-thioadenosine + spermidine + H(+). It functions in the pathway amine and polyamine biosynthesis; spermidine biosynthesis; spermidine from putrescine: step 1/1. Catalyzes the irreversible transfer of a propylamine group from the amino donor S-adenosylmethioninamine (decarboxy-AdoMet) to putrescine (1,4-diaminobutane) to yield spermidine. This is Polyamine aminopropyltransferase from Hydrogenobaculum sp. (strain Y04AAS1).